A 99-amino-acid polypeptide reads, in one-letter code: Large ribosomal subunit protein bL27 (99 aa).

The propeptide occupies 1–10; sequence MKLIFDIQLF.

The protein belongs to the bacterial ribosomal protein bL27 family. The N-terminus is cleaved by ribosomal processing cysteine protease Prp.

The sequence is that of Large ribosomal subunit protein bL27 from Caldicellulosiruptor bescii (strain ATCC BAA-1888 / DSM 6725 / KCTC 15123 / Z-1320) (Anaerocellum thermophilum).